A 370-amino-acid chain; its full sequence is Tryptophan--tRNA ligase (370 aa).

The short motif at 75–83 (PSGKMHFGH) is the 'HIGH' region element. Positions 255–259 (KMSSS) match the 'KMSKS' region motif.

The protein belongs to the class-I aminoacyl-tRNA synthetase family.

It localises to the cytoplasm. It catalyses the reaction tRNA(Trp) + L-tryptophan + ATP = L-tryptophyl-tRNA(Trp) + AMP + diphosphate + H(+). In Methanocaldococcus jannaschii (strain ATCC 43067 / DSM 2661 / JAL-1 / JCM 10045 / NBRC 100440) (Methanococcus jannaschii), this protein is Tryptophan--tRNA ligase.